The following is a 232-amino-acid chain: uncharacterized protein (232 aa).

The protein localises to the cytoplasm. Its subcellular location is the nucleus. This is an uncharacterized protein from Saccharomyces cerevisiae (strain ATCC 204508 / S288c) (Baker's yeast).